The primary structure comprises 784 residues: Ent-kaurene synthase 1, chloroplastic (784 aa).

Residues 1–28 (MNLSLCIASPLLTKSSRPTALSAIHTAS) constitute a chloroplast transit peptide. Positions 528, 532, 672, and 680 each coordinate Mg(2+). Residues 528 to 532 (DDFFD) carry the DDXXD motif motif.

Belongs to the terpene synthase family. The cofactor is Mg(2+). Accumulates in leaves.

It is found in the plastid. The protein resides in the chloroplast. The catalysed reaction is ent-copalyl diphosphate = ent-kaur-16-ene + diphosphate. It functions in the pathway secondary metabolite biosynthesis; terpenoid biosynthesis. The protein operates within plant hormone biosynthesis; gibberellin biosynthesis. Functionally, involved in the biosynthesis of ent-kaurene diterpenoids natural products such as oridonin, miltiradiene, eriocalyxin B and nezukol, known to exhibit antitumor, anti-inflammatory and antibacterial activities, and in the production of gibberellins phytohormones. Catalyzes the conversion of ent-copalyl diphosphate (ent-CPP) to ent-kaurene. The sequence is that of Ent-kaurene synthase 1, chloroplastic from Stevia rebaudiana (Stevia).